Consider the following 358-residue polypeptide: DnaJ homolog subfamily C member 18 (358 aa).

The J domain occupies 82–146 (NYYEILGVSR…DKRLRYDEYG (65 aa)). The chain crosses the membrane as a helical span at residues 228-248 (AFIQLLPVLVIVIISVITQLL).

It is found in the endoplasmic reticulum membrane. The chain is DnaJ homolog subfamily C member 18 (DNAJC18) from Macaca fascicularis (Crab-eating macaque).